A 142-amino-acid chain; its full sequence is NADH-quinone oxidoreductase subunit A (142 aa).

Transmembrane regions (helical) follow at residues 8-28 (FGTVFVFLLLGIIFVVGGYLT), 63-83 (FYVVALIFIIFDVEVVFLFPW), and 93-113 (FALIEALVFAGILVIGLVYAW).

This sequence belongs to the complex I subunit 3 family. As to quaternary structure, NDH-1 is composed of 14 different subunits. Subunits NuoA, H, J, K, L, M, N constitute the membrane sector of the complex.

The protein resides in the cell inner membrane. The catalysed reaction is a quinone + NADH + 5 H(+)(in) = a quinol + NAD(+) + 4 H(+)(out). Functionally, NDH-1 shuttles electrons from NADH, via FMN and iron-sulfur (Fe-S) centers, to quinones in the respiratory chain. The immediate electron acceptor for the enzyme in this species is believed to be a menaquinone. Couples the redox reaction to proton translocation (for every two electrons transferred, four hydrogen ions are translocated across the cytoplasmic membrane), and thus conserves the redox energy in a proton gradient. The polypeptide is NADH-quinone oxidoreductase subunit A (Chlorobium phaeobacteroides (strain BS1)).